We begin with the raw amino-acid sequence, 108 residues long: Ribonuclease P protein component 4 (108 aa).

Zn(2+) is bound by residues cysteine 67, cysteine 70, cysteine 93, and cysteine 96.

This sequence belongs to the eukaryotic/archaeal RNase P protein component 4 family. In terms of assembly, consists of a catalytic RNA component and at least 4-5 protein subunits. It depends on Zn(2+) as a cofactor.

The protein localises to the cytoplasm. It carries out the reaction Endonucleolytic cleavage of RNA, removing 5'-extranucleotides from tRNA precursor.. Functionally, part of ribonuclease P, a protein complex that generates mature tRNA molecules by cleaving their 5'-ends. The sequence is that of Ribonuclease P protein component 4 from Methanococcoides burtonii (strain DSM 6242 / NBRC 107633 / OCM 468 / ACE-M).